Here is a 510-residue protein sequence, read N- to C-terminus: Dolichyl-P-Man:Man5GlcNAc2-PP-dolichol alpha-1,3-mannosyltransferase Alg3 (510 aa).

The Cytoplasmic portion of the chain corresponds to 1-43 (MAPPKAASHRPAVRRKKSGTLVDSILDKYLNVRFFKYLLLEPA). Residues 44–64 (ALPIVGLFVLLAELVINVVVI) form a helical membrane-spanning segment. Over 65–97 (QRVPYTEIDWVAYMQECEGFLNGTTNYSLLRGD) the chain is Lumenal. A helical membrane pass occupies residues 98–118 (TGPLVYPAAFVYIYSALYYVT). Topologically, residues 119-125 (SHGTNVR) are cytoplasmic. Residues 126–146 (LAQYIFAGIYLLQLALVLRLY) form a helical membrane-spanning segment. The Lumenal segment spans residues 147-171 (SKSRKVPPYVLVLSAFTSYRIHSIY). A helical membrane pass occupies residues 172 to 192 (VLRLFNDPVAVLLLYAALNLF). Residues 193 to 211 (LDRRWTLGSTFFSLAVGVK) lie on the Cytoplasmic side of the membrane. Residues 212 to 232 (MNILLFAPALLLFYLANLGLL) form a helical membrane-spanning segment. Arg233 is a topological domain (lumenal). A helical membrane pass occupies residues 234–254 (TILQLAVCGVIQLLLGAPFLL). At 255-294 (THPVEYLRGSFDLGRIFEHKWTVNYRFLSRDVFENRTFHV) the chain is on the cytoplasmic side. The helical transmembrane segment at 295 to 315 (SLLGLHLLLLLAFAKPIWTFF) threads the bilayer. At 316–403 (QSYVRLRRIE…YGIHFDRCTQ (88 aa)) the chain is on the lumenal side. The tract at residues 337–358 (LQLKAQKRPKKVEKDKDKDQKK) is disordered. Residues 348–358 (VEKDKDKDQKK) show a composition bias toward basic and acidic residues. Residues 404–424 (LALLPFFLCNLVGVACSRSLH) traverse the membrane as a helical segment. Residues 425 to 426 (YQ) are Cytoplasmic-facing. A helical membrane pass occupies residues 427-447 (FYVWYFHSLPYLAWSTPYSLG). At 448 to 464 (VRCLILGLIEYCWNTYP) the chain is on the lumenal side. Residues 465 to 485 (STNFSSAALHFTHIILLAGVA) form a helical membrane-spanning segment. The Cytoplasmic portion of the chain corresponds to 486 to 510 (KQLIQTMRINNAAKREQQEQQKKLQ).

It belongs to the glycosyltransferase ALG3 family.

It is found in the endoplasmic reticulum membrane. The enzyme catalyses an alpha-D-Man-(1-&gt;2)-alpha-D-Man-(1-&gt;2)-alpha-D-Man-(1-&gt;3)-[alpha-D-Man-(1-&gt;6)]-beta-D-Man-(1-&gt;4)-beta-D-GlcNAc-(1-&gt;4)-alpha-D-GlcNAc-diphospho-di-trans,poly-cis-dolichol + a di-trans,poly-cis-dolichyl beta-D-mannosyl phosphate = an alpha-D-Man-(1-&gt;2)-alpha-D-Man-(1-&gt;2)-alpha-D-Man-(1-&gt;3)-[alpha-D-Man-(1-&gt;3)-alpha-D-Man-(1-&gt;6)]-beta-D-Man-(1-&gt;4)-beta-D-GlcNAc-(1-&gt;4)-alpha-D-GlcNAc-diphospho-di-trans,poly-cis-dolichol + a di-trans,poly-cis-dolichyl phosphate + H(+). The protein operates within protein modification; protein glycosylation. Functionally, probable alpha-1,3-mannosyltransferase involved in the N-glycosylation pathway. Involved in glycosylation of the TNF receptor grnd, regulating its ligand affinity. Required for normal epithelial growth and architecture. Suppressor of JNK-dependent intestinal stem cell proliferation. The sequence is that of Dolichyl-P-Man:Man5GlcNAc2-PP-dolichol alpha-1,3-mannosyltransferase Alg3 from Drosophila melanogaster (Fruit fly).